The sequence spans 301 residues: Polynucleotide kinase (301 aa).

As to quaternary structure, homotetramer. Mg(2+) serves as cofactor.

The catalysed reaction is a 5'-end dephospho-2'-deoxyribonucleoside-DNA + ATP = a 5'-end 5'-phospho-2'-deoxyribonucleoside-DNA + ADP + H(+). It carries out the reaction a 2'-deoxyribonucleoside 3'-phosphate + H2O = a 2'-deoxyribonucleoside + phosphate. Functionally, acts as a 5'-hydroxyl kinase, a 3'-phosphatase and a 2',3'-cyclic phosphodiesterase. Catalyzes the transfer of the terminal phosphate of ATP to the 5'-hydroxyl termini of ribo- and deoxyribonucleotides. In the presence of ADP the enzyme also catalyzes an exchange reaction. In the exchange reaction, an excess ADP causes the enzyme to transfer the 5' terminal phosphate from phosphorylated DNA to ADP. Involved in countering a host defense mechanism which activates T4-induced anticodon nuclease and shuts off viral translation. The polynucleotide kinase modifies the ends of nicked tRNA generated by the antiviral response of the host bacteria and facilitates repair by T4 RNA ligase. This chain is Polynucleotide kinase (pseT), found in Escherichia coli (Bacteriophage T4).